We begin with the raw amino-acid sequence, 959 residues long: Isoleucine--tRNA ligase (959 aa).

The short motif at 60-70 is the 'HIGH' region element; it reads PYANGSLHIGH. L-isoleucyl-5'-AMP is bound at residue E571. The 'KMSKS' region signature appears at 612–616; that stretch reads KMSKS. Residue K615 coordinates ATP. The Zn(2+) site is built by C928, C931, C948, and C951.

It belongs to the class-I aminoacyl-tRNA synthetase family. IleS type 1 subfamily. As to quaternary structure, monomer. It depends on Zn(2+) as a cofactor.

The protein resides in the cytoplasm. It catalyses the reaction tRNA(Ile) + L-isoleucine + ATP = L-isoleucyl-tRNA(Ile) + AMP + diphosphate. Catalyzes the attachment of isoleucine to tRNA(Ile). As IleRS can inadvertently accommodate and process structurally similar amino acids such as valine, to avoid such errors it has two additional distinct tRNA(Ile)-dependent editing activities. One activity is designated as 'pretransfer' editing and involves the hydrolysis of activated Val-AMP. The other activity is designated 'posttransfer' editing and involves deacylation of mischarged Val-tRNA(Ile). The protein is Isoleucine--tRNA ligase of Nostoc punctiforme (strain ATCC 29133 / PCC 73102).